We begin with the raw amino-acid sequence, 396 residues long: Probable sugar efflux transporter (396 aa).

Helical transmembrane passes span 15–35, 50–70, 81–101, 103–123, 136–156, 170–190, 209–229, 246–266, 275–295, 299–319, 333–353, and 364–384; these read VVTLAVAAFIFNTTEFVPVGL, VGIMLTIYAWVVALMSLPFML, LICLFVVFIASHVLSFLSWSF, VLVISRIGVAFAHAIFWSITA, AQALSLIATGTALAMVLGLPL, FFAIGIGALITLLCLIKLLPL, PALMSIYLLTVVVVTAHYTAY, FATALLLLLGGAGIIGSVIFG, TLVSTAIALLLVCLALLLPAA, IHLGVLSIFWGIAMMIIGLGM, VAMALFSGIFNIGIGAGALVG, and MIGYVGAVPAFAALIWSIIIF.

The protein belongs to the major facilitator superfamily. SotB (TC 2.A.1.2) family.

The protein resides in the cell inner membrane. Its function is as follows. Involved in the efflux of sugars. The physiological role may be the reduction of the intracellular concentration of toxic sugars or sugar metabolites. The chain is Probable sugar efflux transporter from Escherichia coli (strain SMS-3-5 / SECEC).